The chain runs to 281 residues: CLA biosynthesis isomerase (281 aa).

The protein belongs to the ADC family.

The protein resides in the cytoplasm. It carries out the reaction 10-oxo-(12Z)-octadecenoate = 10-oxo-(11E)-octadecenoate. Its pathway is lipid metabolism; fatty acid metabolism. Its function is as follows. Is involved in a saturation metabolic pathway of polyunsaturated fatty acids, that detoxifies unsaturated fatty acids and generates hydroxy fatty acids, oxo fatty acids, conjugated fatty acids such as conjugated linoleic acids (CLAs), and partially saturated trans-fatty acids as intermediates. CLA-DC catalyzes the migration of the carbon-carbon double bond in 10-oxo-(12Z)-octadecenoate to produce 10-oxo-(11E)-octadecenoate, during linoleate metabolism. As part of the gut microbiome, this enzyme modifies host fatty acid composition and is expected to improve human health by altering lipid metabolism related to the onset of metabolic syndrome. The protein is CLA biosynthesis isomerase of Lactiplantibacillus plantarum (Lactobacillus plantarum).